We begin with the raw amino-acid sequence, 124 residues long: MATVNQLVRKPRAPKVEKTNVPALNACPQKRGVCTRVYTTTPKKPNSALRKVARVRLTNGFEVTSYIGGEGHNLQEHSVILIRGGRVKDLPGVRYHTVRGALDCAGVNTRRQGRSKYGAKRPKS.

Asp-89 is modified (3-methylthioaspartic acid).

It belongs to the universal ribosomal protein uS12 family. Part of the 30S ribosomal subunit. Contacts proteins S8 and S17. May interact with IF1 in the 30S initiation complex.

With S4 and S5 plays an important role in translational accuracy. Its function is as follows. Interacts with and stabilizes bases of the 16S rRNA that are involved in tRNA selection in the A site and with the mRNA backbone. Located at the interface of the 30S and 50S subunits, it traverses the body of the 30S subunit contacting proteins on the other side and probably holding the rRNA structure together. The combined cluster of proteins S8, S12 and S17 appears to hold together the shoulder and platform of the 30S subunit. In Shewanella denitrificans (strain OS217 / ATCC BAA-1090 / DSM 15013), this protein is Small ribosomal subunit protein uS12.